Consider the following 429-residue polypeptide: UDP-N-acetylglucosamine 1-carboxyvinyltransferase (429 aa).

Phosphoenolpyruvate is bound at residue 22 to 23 (KN). Residue R102 coordinates UDP-N-acetyl-alpha-D-glucosamine. The active-site Proton donor is C126. C126 is subject to 2-(S-cysteinyl)pyruvic acid O-phosphothioketal. UDP-N-acetyl-alpha-D-glucosamine is bound by residues 131–135 (RPVDL), D316, and I338.

Belongs to the EPSP synthase family. MurA subfamily.

The protein resides in the cytoplasm. The enzyme catalyses phosphoenolpyruvate + UDP-N-acetyl-alpha-D-glucosamine = UDP-N-acetyl-3-O-(1-carboxyvinyl)-alpha-D-glucosamine + phosphate. It functions in the pathway cell wall biogenesis; peptidoglycan biosynthesis. Cell wall formation. Adds enolpyruvyl to UDP-N-acetylglucosamine. The chain is UDP-N-acetylglucosamine 1-carboxyvinyltransferase from Methylobacterium radiotolerans (strain ATCC 27329 / DSM 1819 / JCM 2831 / NBRC 15690 / NCIMB 10815 / 0-1).